A 242-amino-acid chain; its full sequence is Small ribosomal subunit protein uS2 (242 aa).

It belongs to the universal ribosomal protein uS2 family.

The polypeptide is Small ribosomal subunit protein uS2 (Shewanella amazonensis (strain ATCC BAA-1098 / SB2B)).